A 700-amino-acid polypeptide reads, in one-letter code: Probable pre-mRNA-splicing factor ATP-dependent RNA helicase DEAH4 (700 aa).

Ala2 carries the post-translational modification N-acetylalanine. A Helicase ATP-binding domain is found at 14-178 (VETVEKNSVV…FSGCPVLNVP (165 aa)). ATP is bound at residue 27 to 34 (GETGSGKS). The DEAH box signature appears at 124–127 (DEAH). The 178-residue stretch at 200-377 (SLKVAIDIHV…GSVLYLKSLD (178 aa)) folds into the Helicase C-terminal domain. Disordered regions lie at residues 463-486 (PARS…NGSG) and 654-682 (GPAP…SENV).

Belongs to the DEAD box helicase family. DEAH subfamily. PRP22 sub-subfamily.

The enzyme catalyses ATP + H2O = ADP + phosphate + H(+). In terms of biological role, may be involved in pre-mRNA splicing. The protein is Probable pre-mRNA-splicing factor ATP-dependent RNA helicase DEAH4 of Arabidopsis thaliana (Mouse-ear cress).